Reading from the N-terminus, the 405-residue chain is Obg-like ATPase homolog (405 aa).

One can recognise an OBG-type G domain in the interval 17–283; the sequence is PTSGIVGLAN…CKGIASEYFD (267 aa). ATP contacts are provided by residues 26–31 and Val-231; that span reads NVGKST. The TGS domain occupies 312–398; that stretch reads NLISFFTCGP…QDNDIALFKA (87 aa).

This sequence belongs to the TRAFAC class OBG-HflX-like GTPase superfamily. OBG GTPase family.

The protein localises to the mitochondrion. Functionally, hydrolyzes ATP, and can also hydrolyze GTP with lower efficiency. Has lower affinity for GTP. The polypeptide is Obg-like ATPase homolog (YLF2) (Saccharomyces cerevisiae (strain ATCC 204508 / S288c) (Baker's yeast)).